The sequence spans 128 residues: Holo-[acyl-carrier-protein] synthase (128 aa).

2 residues coordinate Mg(2+): Asp-9 and Glu-60.

This sequence belongs to the P-Pant transferase superfamily. AcpS family. It depends on Mg(2+) as a cofactor.

It localises to the cytoplasm. The enzyme catalyses apo-[ACP] + CoA = holo-[ACP] + adenosine 3',5'-bisphosphate + H(+). Functionally, transfers the 4'-phosphopantetheine moiety from coenzyme A to a Ser of acyl-carrier-protein. The chain is Holo-[acyl-carrier-protein] synthase from Buchnera aphidicola subsp. Baizongia pistaciae (strain Bp).